We begin with the raw amino-acid sequence, 875 residues long: MSDDTVTPMMAQYLEIKAQNPGAILFYRMGDFYEMFFDDAALAAEALDIALTKRGKHRGEDIAMCGVPIHAAEGYLLTLIRKGFRVAIAEQMEDPAEAKKRGSKSVVRREVVRLVTPGTLTEDTLLEARRHNYLCAFAEIRDEAALAWADISTGELSVTACPLPRLMPELARLAPRELLVADERELDWIEEVGCALTPLSRASFDSASAEKRLCALFGVGTLESFGNFTRAELSAMGALVDYLDLTQRGKLPLLRPPVRETVGGTVQIDAATRRNLEITQALAGGRDGSLLSAVDRTVTAPGARLLERRLSSPTRDLGLIHERLGAVRWLTEEPRLREEMRASLRRVPDMDRALSRLALDRAGPRDMAAIRAGLAQAQEIAQRMPAEAPALVTRALEALGGHEALVDLLDQALVAEPPLLARDGGFIAQGFDADLDETRRLRDEGRGVIASMQAGFIEVTGIQSLKIKHNNVLGYFIEVTSTHAEKMLSAPLSERFIHRQTTAGQVRFTTVELSELETRILNAGNRALDLEKMHFAALRTAILDLAGQIGRAARSLAELDLISAFADLAVTEDWTEPEIDDSRAFAIEAGRHPVVERALRRTGTPFVANHCDLSTGETPAVWLITGPNMAGKSTFLRQNALIALLAQAGSFVPARRAHIGLVSQIFSRVGASDDLARGRSTFMVEMVETAAILNQADDRALVILDEIGRGTATWDGLSIAWATLEHLHDRNRCRALFATHYHEMTALAGKLKGVENATVAVKEWEGDVIFLHEVRRGAADRSYGVQVARLAGLPASVIERARTVLDALESGERESGGRRQTLIDDLPLFRAAPPPPAPAAPKTSPVEERLREIQPDDLSPREALKLLYDLRALLT.

Residue 626–633 (GPNMAGKS) coordinates ATP. The segment at 830-855 (RAAPPPPAPAAPKTSPVEERLREIQP) is disordered. The span at 845–855 (PVEERLREIQP) shows a compositional bias: basic and acidic residues.

This sequence belongs to the DNA mismatch repair MutS family.

This protein is involved in the repair of mismatches in DNA. It is possible that it carries out the mismatch recognition step. This protein has a weak ATPase activity. In Cereibacter sphaeroides (strain ATCC 17023 / DSM 158 / JCM 6121 / CCUG 31486 / LMG 2827 / NBRC 12203 / NCIMB 8253 / ATH 2.4.1.) (Rhodobacter sphaeroides), this protein is DNA mismatch repair protein MutS.